The chain runs to 96 residues: MKLRPMQDRIIVKRVEEETKTAGGIFIPETAKEKPMEGEVVAVGNGKRTEDGKVLPLDVKVGDKVLFGKYSGTEIKVEGQDFLIMREDDILGVIEK.

This sequence belongs to the GroES chaperonin family. In terms of assembly, heptamer of 7 subunits arranged in a ring. Interacts with the chaperonin GroEL.

Its subcellular location is the cytoplasm. Its function is as follows. Together with the chaperonin GroEL, plays an essential role in assisting protein folding. The GroEL-GroES system forms a nano-cage that allows encapsulation of the non-native substrate proteins and provides a physical environment optimized to promote and accelerate protein folding. GroES binds to the apical surface of the GroEL ring, thereby capping the opening of the GroEL channel. The sequence is that of Co-chaperonin GroES from Geotalea uraniireducens (strain Rf4) (Geobacter uraniireducens).